The chain runs to 708 residues: Kin of IRRE-like protein 2 (708 aa).

An N-terminal signal peptide occupies residues 1–20 (MLRMRVPALLVLLFCFRGRA). The Extracellular portion of the chain corresponds to 21-510 (GPSPHFLQQP…GRRDLLPTVR (490 aa)). 5 consecutive Ig-like C2-type domains span residues 24-118 (PHFL…AQLH), 123-222 (PEAP…ITLS), 227-307 (PEVT…TALD), 312-394 (PILQ…ARLT), and 398-501 (PPVV…ASLG). The cysteines at positions 45 and 103 are disulfide-linked. Asn-143 carries an N-linked (GlcNAc...) asparagine glycan. Cystine bridges form between Cys-146/Cys-204 and Cys-248/Cys-291. Residues 149 to 151 (RGD) carry the Cell attachment site motif. N-linked (GlcNAc...) asparagine glycosylation occurs at Asn-301. 2 cysteine pairs are disulfide-bonded: Cys-333–Cys-375 and Cys-419–Cys-485. A glycan (N-linked (GlcNAc...) asparagine) is linked at Asn-484. The helical transmembrane segment at 511–531 (IVAGVAAATTTLLMVITGVAL) threads the bilayer. Over 532 to 708 (CCWRHSKASA…PSHPRLQTHV (177 aa)) the chain is Cytoplasmic. Positions 545–601 (EQKNLMRIPGSSDGSSSRGPEEEETGSREDRGPIVHTDHSDLVLEEEGTLETKDPTN) are disordered. Residues 553-562 (PGSSDGSSSR) show a composition bias toward low complexity. Residues 569-586 (TGSREDRGPIVHTDHSDL) are compositionally biased toward basic and acidic residues. A Phosphoserine modification is found at Ser-571. Residues Tyr-603, Tyr-604, and Tyr-661 each carry the phosphotyrosine modification. The interval 684–708 (LAPGTPPFPYAAFPTPSHPRLQTHV) is disordered.

It belongs to the immunoglobulin superfamily. Homodimer. Interacts with NPHS2/podocin (via the C-terminus). Interacts with NPHS1 (via the Ig-like domains). Interacts with FYN. In terms of processing, N-glycosylated. The extracellular domain is cleaved leading to the generation of a soluble fragment and a membrane-bound C-terminal fragment, which is further cleaved by gamma-secretase. As to expression, highly expressed in beta-cells of the pancreatic islets.

It localises to the cell membrane. Its function is as follows. May regulate basal insulin secretion. The protein is Kin of IRRE-like protein 2 (KIRREL2) of Homo sapiens (Human).